The following is a 126-amino-acid chain: MSNIISKEQDEAIKYFRNKLNLSDKDLYIPLINFELLRDKNEQYANILYELYKNDPYLFIRALKEGYVVNQPIAFDEAIVRFFNGEELAIVHKTTGRRYNVNVKMKQLPDGFSLQTMDMWLWSELV.

The polypeptide is SPbeta prophage-derived uncharacterized protein YorC (yorC) (Bacillus subtilis (strain 168)).